The following is a 401-amino-acid chain: Elongation factor Tu (401 aa).

The tr-type G domain occupies 10–211; it reads KPHLNVGTIG…ALDTFVPNPK (202 aa). A G1 region spans residues 19–26; that stretch reads GHVDHGKT. A GTP-binding site is contributed by 19–26; sequence GHVDHGKT. Thr26 contacts Mg(2+). Residues 62-66 are G2; it reads GITIA. The G3 stretch occupies residues 83-86; it reads DCPG. GTP-binding positions include 83–87 and 138–141; these read DCPGH and NKAD. Residues 138 to 141 form a G4 region; the sequence is NKAD. Residues 179-181 form a G5 region; the sequence is SAV.

It belongs to the TRAFAC class translation factor GTPase superfamily. Classic translation factor GTPase family. EF-Tu/EF-1A subfamily. In terms of assembly, monomer.

The protein localises to the cytoplasm. It carries out the reaction GTP + H2O = GDP + phosphate + H(+). In terms of biological role, GTP hydrolase that promotes the GTP-dependent binding of aminoacyl-tRNA to the A-site of ribosomes during protein biosynthesis. This chain is Elongation factor Tu, found in Leptospira interrogans serogroup Icterohaemorrhagiae serovar copenhageni (strain Fiocruz L1-130).